Consider the following 203-residue polypeptide: Ras-related protein Rab-13 (203 aa).

Positions 17, 18, 20, 21, 22, 23, and 40 each coordinate GTP. Thr22 lines the Mg(2+) pocket. Positions 31–45 (DNFNNTYISTIGIDF) match the Switch 1 motif. Thr40 provides a ligand contact to Mg(2+). Glycyl lysine isopeptide (Lys-Gly) (interchain with G-Cter in ubiquitin) cross-links involve residues Lys46 and Lys58. Mg(2+) is bound at residue Asp63. The Switch 2 motif lies at 63–80 (DTAGQERFKTITTAYYRG). GTP contacts are provided by Gly66, Asn121, Lys122, Asp124, Ala152, and Lys153. Residues 173–203 (SGGRRSGNHSKPSSTDLKPSDKKNTNKCSLG) form a disordered region. Position 178 is a phosphoserine (Ser178). Cys200 carries the cysteine methyl ester modification. A lipid anchor (S-geranylgeranyl cysteine) is attached at Cys200. The propeptide at 201–203 (SLG) is removed in mature form.

It belongs to the small GTPase superfamily. Rab family. Interacts (GTP-bound form) with MICALL2; competes with RAB8A and is involved in tight junctions assembly. Interacts (GTP-bound form) with MICALL1. Interacts (GTP-bound form) with MICAL1, MICAL3, MICALCL, EHBP1 and EHBP1L1; ternary complexes of RAB8A, RAB13 and either MICAL1 or EHBP1L1 are possible. Interacts with PRKACA; downstream effector of RAB13 involved in tight junction assembly. Interacts with GRB2; may recruit RAB13 to the leading edge of migrating endothelial cells where it can activate RHOA. Interacts (isoprenylated form) with PDE6D; dissociates RAB13 from membranes. Interacts with BICDL2/BICDR2. Interacts with LEPROT and LEPROTL1. Mg(2+) is required as a cofactor. In terms of processing, ubiquitinated via 'Lys-11'-linked ubiquitination on Lys-46 and Lys-58; impairing the recruitment of guanosine diphosphate (GDP) dissociation inhibitor 1/GDI1.

The protein localises to the cell membrane. It is found in the cytoplasmic vesicle membrane. It localises to the cell junction. The protein resides in the tight junction. Its subcellular location is the golgi apparatus. The protein localises to the trans-Golgi network membrane. It is found in the recycling endosome membrane. It localises to the cell projection. The protein resides in the lamellipodium. The enzyme catalyses GTP + H2O = GDP + phosphate + H(+). With respect to regulation, regulated by guanine nucleotide exchange factors (GEFs) including DENND1C, which promote the exchange of bound GDP for free GTP. Regulated by GTPase activating proteins (GAPs) which increase the GTP hydrolysis activity. Inhibited by GDP dissociation inhibitors (GDIs). Activated in response to insulin. In terms of biological role, the small GTPases Rab are key regulators of intracellular membrane trafficking, from the formation of transport vesicles to their fusion with membranes. Rabs cycle between an inactive GDP-bound form and an active GTP-bound form that is able to recruit to membranes different sets of downstream effectors directly responsible for vesicle formation, movement, tethering and fusion. RAB13 is involved in endocytic recycling and regulates the transport to the plasma membrane of transmembrane proteins like the tight junction protein OCLN/occludin. Thereby, it regulates the assembly and the activity of tight junctions. Moreover, it may also regulate tight junction assembly by activating the PKA signaling pathway and by reorganizing the actin cytoskeleton through the activation of the downstream effectors PRKACA and MICALL2 respectively. Through its role in tight junction assembly, may play a role in the establishment of Sertoli cell barrier. Plays also a role in angiogenesis through regulation of endothelial cells chemotaxis. Also involved in neurite outgrowth. Has also been proposed to play a role in post-Golgi membrane trafficking from the TGN to the recycling endosome. Finally, it has been involved in insulin-induced transport to the plasma membrane of the glucose transporter GLUT4 and therefore may play a role in glucose homeostasis. This is Ras-related protein Rab-13 (RAB13) from Mesocricetus auratus (Golden hamster).